The following is a 246-amino-acid chain: Probable transcriptional regulatory protein WP1214 (246 aa).

The interval 1-22 (MAGHSQFSNIKHRKGAQDAKRS) is disordered.

Belongs to the TACO1 family.

It is found in the cytoplasm. The polypeptide is Probable transcriptional regulatory protein WP1214 (Wolbachia pipientis subsp. Culex pipiens (strain wPip)).